Consider the following 318-residue polypeptide: Porphobilinogen deaminase (318 aa).

The residue at position 241 (C241) is an S-(dipyrrolylmethanemethyl)cysteine.

This sequence belongs to the HMBS family. Monomer. The cofactor is dipyrromethane.

It catalyses the reaction 4 porphobilinogen + H2O = hydroxymethylbilane + 4 NH4(+). Its pathway is porphyrin-containing compound metabolism; protoporphyrin-IX biosynthesis; coproporphyrinogen-III from 5-aminolevulinate: step 2/4. Functionally, tetrapolymerization of the monopyrrole PBG into the hydroxymethylbilane pre-uroporphyrinogen in several discrete steps. The sequence is that of Porphobilinogen deaminase from Geotalea uraniireducens (strain Rf4) (Geobacter uraniireducens).